The chain runs to 318 residues: NADH-quinone oxidoreductase subunit H 2 (318 aa).

9 helical membrane passes run 4-24 (LLIALFSLILLLALLGAAGVF), 77-97 (LAPALAAFPMLAGFGVVAFAP), 106-126 (VGVLFVMGMLALTVWALVLGA), 146-166 (LAYESFLGLSLMGCVLLAGSF), 179-199 (LWFILLQPLGAALFFLAGLAA), 214-234 (LVAGFMTEYSGMSFALFFLGE), 238-258 (ILLVAALFTTLFLGGWAGPIL), 262-282 (VWFGLKVAAISVVFVWLRAAL), and 293-313 (FAWKVALPLALLNLLVTAWIA).

It belongs to the complex I subunit 1 family. In terms of assembly, NDH-1 is composed of 14 different subunits. Subunits NuoA, H, J, K, L, M, N constitute the membrane sector of the complex.

It localises to the cell inner membrane. It catalyses the reaction a quinone + NADH + 5 H(+)(in) = a quinol + NAD(+) + 4 H(+)(out). NDH-1 shuttles electrons from NADH, via FMN and iron-sulfur (Fe-S) centers, to quinones in the respiratory chain. The immediate electron acceptor for the enzyme in this species is believed to be ubiquinone. Couples the redox reaction to proton translocation (for every two electrons transferred, four hydrogen ions are translocated across the cytoplasmic membrane), and thus conserves the redox energy in a proton gradient. This subunit may bind ubiquinone. The protein is NADH-quinone oxidoreductase subunit H 2 of Cereibacter sphaeroides (strain ATCC 17029 / ATH 2.4.9) (Rhodobacter sphaeroides).